The following is a 180-amino-acid chain: Small ribosomal subunit protein bS18 (180 aa).

2 disordered regions span residues 1–26 (MKNK…AHKV) and 53–82 (YSDK…DKES).

The protein belongs to the bacterial ribosomal protein bS18 family. As to quaternary structure, part of the 30S ribosomal subunit. Forms a tight heterodimer with protein bS6.

Its function is as follows. Binds as a heterodimer with protein bS6 to the central domain of the 16S rRNA, where it helps stabilize the platform of the 30S subunit. This is Small ribosomal subunit protein bS18 from Karelsulcia muelleri (strain GWSS) (Sulcia muelleri).